Reading from the N-terminus, the 113-residue chain is Molt-inhibiting hormone (113 aa).

Residues 1–35 (MMSRTESRYSSQRTWLLSMVVLAALWSISVQRATA) form the signal peptide. 3 cysteine pairs are disulfide-bonded: C42–C79, C59–C75, and C62–C88.

The protein belongs to the arthropod CHH/MIH/GIH/VIH hormone family.

Its subcellular location is the secreted. Its function is as follows. Inhibits Y-organs where molting hormone (ecdysteroid) is secreted. A molting cycle is initiated when MIH secretion diminishes or stops. This Metacarcinus magister (Dungeness crab) protein is Molt-inhibiting hormone.